Reading from the N-terminus, the 233-residue chain is Large ribosomal subunit protein uL1 (233 aa).

The protein belongs to the universal ribosomal protein uL1 family. Part of the 50S ribosomal subunit.

In terms of biological role, binds directly to 23S rRNA. The L1 stalk is quite mobile in the ribosome, and is involved in E site tRNA release. Protein L1 is also a translational repressor protein, it controls the translation of the L11 operon by binding to its mRNA. The chain is Large ribosomal subunit protein uL1 from Shewanella halifaxensis (strain HAW-EB4).